A 479-amino-acid polypeptide reads, in one-letter code: ESX-1 secretion system ATPase EccB1 (479 aa).

Residues 1–44 are Cytoplasmic-facing; sequence MAGFRLTTKVQVSGWRFLLRRVEHAIVRRDTRMFDDPLQFYSRA. Residues 45–65 form a helical membrane-spanning segment; sequence VFAGVVVSVLICLGAALMAYF. The Periplasmic portion of the chain corresponds to 66 to 479; that stretch reads KPLGKQGSDQ…NPRKVASGEG (414 aa). C152 and C347 form a disulfide bridge.

This sequence belongs to the EccB family. As to quaternary structure, part of the ESX-1 / type VII secretion system (T7SS), which is composed of cytosolic and membrane components. The ESX-1 membrane complex is composed of EccB1, EccCa1, EccCb1, EccD1 and EccE1.

It localises to the cell inner membrane. In terms of biological role, an ATPase. Part of the ESX-1 / type VII specialized secretion system (T7SS), which exports several proteins including EsxA and EsxB. Plays a role in DNA conjugation, in both donor and recipient strains. The protein is ESX-1 secretion system ATPase EccB1 of Mycolicibacterium smegmatis (strain MKD8) (Mycobacterium smegmatis).